The chain runs to 100 residues: Large ribosomal subunit protein uL23 (100 aa).

This sequence belongs to the universal ribosomal protein uL23 family. Part of the 50S ribosomal subunit. Contacts protein L29, and trigger factor when it is bound to the ribosome.

In terms of biological role, one of the early assembly proteins it binds 23S rRNA. One of the proteins that surrounds the polypeptide exit tunnel on the outside of the ribosome. Forms the main docking site for trigger factor binding to the ribosome. This is Large ribosomal subunit protein uL23 from Aliivibrio fischeri (strain MJ11) (Vibrio fischeri).